The primary structure comprises 309 residues: tRNA pseudouridine synthase B (309 aa).

The active-site Nucleophile is aspartate 45.

It belongs to the pseudouridine synthase TruB family. Type 1 subfamily.

It catalyses the reaction uridine(55) in tRNA = pseudouridine(55) in tRNA. Its function is as follows. Responsible for synthesis of pseudouridine from uracil-55 in the psi GC loop of transfer RNAs. The protein is tRNA pseudouridine synthase B of Oleidesulfovibrio alaskensis (strain ATCC BAA-1058 / DSM 17464 / G20) (Desulfovibrio alaskensis).